We begin with the raw amino-acid sequence, 796 residues long: Kinesin-like protein KIF3C (796 aa).

The region spanning 10-367 (ALKVVARCRP…LRFANRAKNI (358 aa)) is the Kinesin motor domain. Position 97–104 (97–104 (GQTGTGKT)) interacts with ATP. 3 disordered regions span residues 252–292 (RQNK…PKEA), 397–422 (EKKGMLGKRPRRKSSRRKKAVSAPAG), and 758–796 (KVRKSRSWCQSPQRMPPPSTAHASMTSVPLHPATVVDHD). The segment covering 256-269 (AGPNAAGGPATQPT) has biased composition (low complexity). A coiled-coil region spans residues 378 to 632 (KDTLLREFQE…NEQTRELKLK (255 aa)). The span at 401–416 (MLGKRPRRKSSRRKKA) shows a compositional bias: basic residues. The globular stretch occupies residues 633 to 793 (YLIIENFIPP…SVPLHPATVV (161 aa)).

It belongs to the TRAFAC class myosin-kinesin ATPase superfamily. Kinesin family. Kinesin II subfamily. Heterodimer of KIF3A and KIF3C.

The protein resides in the cytoplasm. It is found in the cytoskeleton. Functionally, microtubule-based anterograde translocator for membranous organelles. This is Kinesin-like protein KIF3C (Kif3c) from Mus musculus (Mouse).